The following is a 99-amino-acid chain: NADH-quinone oxidoreductase subunit K (99 aa).

3 consecutive transmembrane segments (helical) span residues 3 to 23, 28 to 48, and 59 to 79; these read ILFSLFISMAMFTFGIIGILI, LIVFMCVELMLNAANLLFVAF, and IWVFFVLVVAAAEAAVGLAII.

The protein belongs to the complex I subunit 4L family. NDH-1 is composed of 14 different subunits. Subunits NuoA, H, J, K, L, M, N constitute the membrane sector of the complex.

It is found in the cell inner membrane. It carries out the reaction a quinone + NADH + 5 H(+)(in) = a quinol + NAD(+) + 4 H(+)(out). NDH-1 shuttles electrons from NADH, via FMN and iron-sulfur (Fe-S) centers, to quinones in the respiratory chain. The immediate electron acceptor for the enzyme in this species is believed to be ubiquinone. Couples the redox reaction to proton translocation (for every two electrons transferred, four hydrogen ions are translocated across the cytoplasmic membrane), and thus conserves the redox energy in a proton gradient. This Protochlamydia amoebophila (strain UWE25) protein is NADH-quinone oxidoreductase subunit K.